Consider the following 261-residue polypeptide: uncharacterized protein (261 aa).

3 residues coordinate NADP(+): I33, D78, and N105. S157 (proton donor) is an active-site residue. The NADP(+) site is built by Y172, K176, and S206. Y172 serves as the catalytic Proton acceptor. K176 serves as the catalytic Lowers pKa of active site Tyr.

It belongs to the short-chain dehydrogenases/reductases (SDR) family.

Its subcellular location is the cytoplasm. The protein resides in the nucleus. This is an uncharacterized protein from Schizosaccharomyces pombe (strain 972 / ATCC 24843) (Fission yeast).